A 520-amino-acid chain; its full sequence is Glutamate decarboxylase-like protein FG08083 (520 aa).

Substrate is bound at residue 86–88; it reads KLV. N6-(pyridoxal phosphate)lysine is present on Lys-300. The tract at residues 338-357 is disordered; that stretch reads KNGVSSEQSANTNGSEKESW. A compositionally biased stretch (polar residues) spans 340–351; the sequence is GVSSEQSANTNG. Residue Arg-492 participates in substrate binding.

The protein belongs to the group II decarboxylase family. The cofactor is pyridoxal 5'-phosphate.

Its pathway is mycotoxin biosynthesis. Its function is as follows. Glutamate decarboxylase-like protein; part of the gene cluster that mediates the biosynthesis of butenolide, a mycotoxin that shows antibiotic activity but does not seem to play a major role in the spread of head blight in wheat. Butenolide is derived from glutamic acid via a 4-acetamido-2-butenoic acid intermediate. The predicted function of the NADH:flavin oxidoreductase FG08077, the cytochrome P450 monooxygenase FG08079, the decarboxylase FG08083, and the putative acetyltransferase FG08082 are consistent with this pathway, however, the respective activities of the butelonide biosynthesis cluster enzymes have still to be experimentally determined. In Gibberella zeae (strain ATCC MYA-4620 / CBS 123657 / FGSC 9075 / NRRL 31084 / PH-1) (Wheat head blight fungus), this protein is Glutamate decarboxylase-like protein FG08083.